A 239-amino-acid polypeptide reads, in one-letter code: Lactose-binding lectin-2 (239 aa).

Positions 122 and 124 each coordinate Mn(2+). Ca(2+) contacts are provided by D124, Y126, N128, and D131. 2 residues coordinate Mn(2+): D131 and H137.

This sequence belongs to the leguminous lectin family. In terms of assembly, homotetramer. As to expression, seed.

Its subcellular location is the vacuole. The protein localises to the aleurone grain. Its function is as follows. Lactose-binding lectin. Also binds derivatives of galactose, glucose, lactose, and mannose. Binds O-glycoproteins such as mucins more strongly than N-glycoproteins. Shows agglutinating activity towards rabbit erythrocytes. This is Lactose-binding lectin-2 from Cymbosema roseum (Dioclea purpurea).